We begin with the raw amino-acid sequence, 144 residues long: Large ribosomal subunit protein uL15 (144 aa).

A disordered region spans residues 1-52; it reads MRLNTLSPAEGAKHAPKRVGRGIGSGLGKTAGRGHKGQNSRSGGGVRRGFEG. The segment covering 21–31 has biased composition (gly residues); that stretch reads RGIGSGLGKTA.

It belongs to the universal ribosomal protein uL15 family. In terms of assembly, part of the 50S ribosomal subunit.

Binds to the 23S rRNA. In Yersinia pseudotuberculosis serotype O:1b (strain IP 31758), this protein is Large ribosomal subunit protein uL15.